The sequence spans 473 residues: MSATLTGSGTALGFSCSSKISKRVSSSPSTRCSIKMSVSVDEKKKSFTLQKSEEAFNAAKNLMPGGVNSPVRAFKSVGGQPVLIDSVKGSKMWDIDGNEYIDYVGSWGPAIIGHADDEVLAALAETMKKGTSFGAPCLLENVLAEMVISAVPSIEMVRFVNSGTEACMGVLRLARAFTNKEKFIKFEGCYHGHANAFLVKAGSGVATLGLPDSPGVPKAATSDTLTAPYNDIEAVAKLFEAHKGEISAVILEPVVGNSGFITPTPEFINGLRQLTKDNGALLIFDEVMTGFRLAYGGAQEYFGITPDLTTLGKIIGGGLPVGAYGGRRDIMEMVAPAGPMYQAGTLSGNPLAMTAGIHTLKRLKQPGTYEYLDKITKELTNGILEAGKKTGHPMCGGYISGMFGFFFAEGPVYNFADAKKSDTEKFGKFFRGMLEEGVYFAPSQFEAGFTSLAHTSEDIQFTISAAERVLGRI.

The transit peptide at 1 to 37 (MSATLTGSGTALGFSCSSKISKRVSSSPSTRCSIKMS) directs the protein to the chloroplast. Residue K313 is modified to N6-(pyridoxal phosphate)lysine.

The protein belongs to the class-III pyridoxal-phosphate-dependent aminotransferase family. HemL subfamily. In terms of assembly, homodimer. The cofactor is pyridoxal 5'-phosphate.

Its subcellular location is the plastid. It localises to the chloroplast. The enzyme catalyses (S)-4-amino-5-oxopentanoate = 5-aminolevulinate. It participates in porphyrin-containing compound metabolism; protoporphyrin-IX biosynthesis; 5-aminolevulinate from L-glutamyl-tRNA(Glu): step 2/2. Its pathway is porphyrin-containing compound metabolism; chlorophyll biosynthesis. The chain is Glutamate-1-semialdehyde 2,1-aminomutase, chloroplastic (GSA) from Brassica napus (Rape).